The chain runs to 141 residues: ATP synthase epsilon chain (141 aa).

This sequence belongs to the ATPase epsilon chain family. F-type ATPases have 2 components, CF(1) - the catalytic core - and CF(0) - the membrane proton channel. CF(1) has five subunits: alpha(3), beta(3), gamma(1), delta(1), epsilon(1). CF(0) has three main subunits: a, b and c.

The protein resides in the cell inner membrane. Its function is as follows. Produces ATP from ADP in the presence of a proton gradient across the membrane. The protein is ATP synthase epsilon chain of Burkholderia mallei (strain NCTC 10247).